Here is a 100-residue protein sequence, read N- to C-terminus: Putative sodium channel toxin Ts26 (100 aa).

The N-terminal stretch at M1–S22 is a signal peptide. The 69-residue stretch at R24 to E92 folds into the LCN-type CS-alpha/beta domain. 4 cysteine pairs are disulfide-bonded: C38/C64, C50/C69, C54/C71, and C65/C91.

This sequence belongs to the long (4 C-C) scorpion toxin superfamily. Sodium channel inhibitor family. In terms of tissue distribution, expressed by the venom gland.

Its subcellular location is the secreted. In terms of biological role, putative sodium channel toxin. This chain is Putative sodium channel toxin Ts26, found in Tityus serrulatus (Brazilian scorpion).